We begin with the raw amino-acid sequence, 192 residues long: MSEKAVRRKLVIIGDGACGKTSLLYVFTLGKFPEQYHPTVFENYVTDCRVDGIKVSLTLWDTAGQEEYERLRPFSYSKADIILIGFAVDNFESLINARTKWADEALRYCPDAPIVLVGLKKDLRQEAHFKENATDEMVPIEDAKQVARAIGAKKYMECSALTGEGVDDVFEVATRTSLLMKKEPGANCCIIL.

14 to 21 (GDGACGKT) contributes to the GTP binding site. The short motif at 36-44 (YHPTVFENY) is the Effector region element. Residues 61–65 (DTAGQ) and 119–122 (LKKD) contribute to the GTP site. Cysteine 188 carries the S-palmitoyl cysteine lipid modification. Cysteine 189 bears the Cysteine methyl ester mark. Cysteine 189 carries the S-geranylgeranyl cysteine lipid modification. The propeptide at 190–192 (IIL) is removed in mature form.

This sequence belongs to the small GTPase superfamily. Rho family. Interacts with BEM4.

Its subcellular location is the cell membrane. It carries out the reaction GTP + H2O = GDP + phosphate + H(+). This chain is GTP-binding protein RHO2 (RHO2), found in Saccharomyces cerevisiae (strain ATCC 204508 / S288c) (Baker's yeast).